Here is a 197-residue protein sequence, read N- to C-terminus: ATP-dependent Clp protease proteolytic subunit (197 aa).

Catalysis depends on serine 102, which acts as the Nucleophile. Histidine 127 is a catalytic residue.

Belongs to the peptidase S14 family. As to quaternary structure, fourteen ClpP subunits assemble into 2 heptameric rings which stack back to back to give a disk-like structure with a central cavity, resembling the structure of eukaryotic proteasomes.

The protein localises to the cytoplasm. It carries out the reaction Hydrolysis of proteins to small peptides in the presence of ATP and magnesium. alpha-casein is the usual test substrate. In the absence of ATP, only oligopeptides shorter than five residues are hydrolyzed (such as succinyl-Leu-Tyr-|-NHMec, and Leu-Tyr-Leu-|-Tyr-Trp, in which cleavage of the -Tyr-|-Leu- and -Tyr-|-Trp bonds also occurs).. Functionally, cleaves peptides in various proteins in a process that requires ATP hydrolysis. Has a chymotrypsin-like activity. Plays a major role in the degradation of misfolded proteins. The sequence is that of ATP-dependent Clp protease proteolytic subunit from Buchnera aphidicola subsp. Schizaphis graminum (strain Sg).